The sequence spans 571 residues: Optineurin (571 aa).

Disordered regions lie at residues 1–32 and 100–144; these read MSHQPLSCLTEKGDSPSESTGNGPPHLAHPNL and LSHE…DQLR. A coiled-coil region spans residues 38–170; the sequence is EELLQQMKEL…VSELQLKLNS (133 aa). The segment at 58–209 is interaction with Rab8; it reads MKLNNQAMKG…GPTRTVSIGT (152 aa). The segment covering 100–143 has biased composition (basic and acidic residues); sequence LSHENEKLKEELGKLKGKSERSSEDPTDDSRLPRAEAEQEKDQL. The LIR signature appears at 176–181; it reads DSFVEI. Residue Ser-177 is modified to Phosphoserine; by TBK1. The span at 186–197 shows a compositional bias: basic and acidic residues; the sequence is GEAEGSVKEIKH. Disordered regions lie at residues 186-210 and 255-291; these read GEAEGSVKEIKHSPGPTRTVSIGTS and VSDFEKKASNRSEIETQTEGSTEKENEEEKGPETVGS. Phosphoserine is present on Ser-198. Polar residues predominate over residues 201-210; that stretch reads PTRTVSIGTS. Residues 233-502 are a coiled coil; the sequence is CLREGNQKVE…LLKENDAFED (270 aa). Basic and acidic residues-rich tracts occupy residues 255 to 268 and 275 to 286; these read VSDFEKKASNRSEI and STEKENEEEKGP. Ser-336 carries the phosphoserine modification. Positions 405-571 are interaction with HD; sequence TRKESEKVDR…LQIHVMDCII (167 aa). The segment at 406-514 is interaction with MYO6; that stretch reads RKESEKVDRA…RQSLMEMQSR (109 aa). The UBAN motif lies at 468–473; the sequence is DFHAER. Ser-520 is subject to Phosphoserine. The CCHC NOA-type zinc-finger motif lies at 541 to 571; it reads QRNIPIHSCPKCGEVLPDIDTLQIHVMDCII. Zn(2+)-binding residues include Cys-549, Cys-552, His-565, and Cys-569.

In terms of assembly, self-associates. Interacts with HD. Interacts with GTF3A. Interacts with MYO6. Interacts (via UBAN) with ubiquitinated TFRC. Interacts with GTP-bound Rab8 (RAB8A and/or RAB8B). Interacts with TBC1D17. Interacts with TBK1. Interacts with TRAF3. Binds to linear ubiquitin chains. Interacts with LC3 family members MAP1LC3A, MAP1LC3B, GABARAP, GABARAPL1 and GABARAPL2; OPTN phosphorylation increases the association (at least with MAP1LC3B). Interacts with RAB12; the interaction may be indirect. Interacts with TBK1; this interaction leads to the Golgi localization of TBK1 and its subsequent activation. Interacts with palmitoyltransferase ZDHHC17/HIP14; the interaction does not lead to palmitoylation of OPTN. Interacts with CYLD. Interacts with TOM1; the interaction is indirect and is mediated by MYO6, which acts as a bridge between TOM1 and OPTN. Interacts with USP12; the interaction is independent of USP12 deubiquitinase activity and may be involved in regulation of autophagic flux. Phosphorylated by TBK1, leading to restrict bacterial proliferation in case of infection. In terms of tissue distribution, present in aqueous humor of the eye (at protein level).

It localises to the cytoplasm. The protein localises to the perinuclear region. Its subcellular location is the golgi apparatus. The protein resides in the trans-Golgi network. It is found in the cytoplasmic vesicle. It localises to the autophagosome. The protein localises to the recycling endosome. Functionally, plays an important role in the maintenance of the Golgi complex, in membrane trafficking, in exocytosis, through its interaction with myosin VI and Rab8. Links myosin VI to the Golgi complex and plays an important role in Golgi ribbon formation. Negatively regulates the induction of IFNB in response to RNA virus infection. Plays a neuroprotective role in the eye and optic nerve. Probably part of the TNF-alpha signaling pathway that can shift the equilibrium toward induction of cell death. May act by regulating membrane trafficking and cellular morphogenesis via a complex that contains Rab8 and huntingtin (HD). Mediates the interaction of Rab8 with the probable GTPase-activating protein TBC1D17 during Rab8-mediated endocytic trafficking, such as that of transferrin receptor (TFRC/TfR); regulates Rab8 recruitment to tubules emanating from the endocytic recycling compartment. Autophagy receptor that interacts directly with both the cargo to become degraded and an autophagy modifier of the MAP1 LC3 family; targets ubiquitin-coated bacteria (xenophagy) and appears to function in the same pathway as SQSTM1 and CALCOCO2/NDP52. This is Optineurin (OPTN) from Macaca mulatta (Rhesus macaque).